Consider the following 347-residue polypeptide: E3 ubiquitin-protein ligase ARK2C (347 aa).

2 disordered regions span residues 23–79 and 268–289; these read PFQR…GTLH and PHKYKKRRPQDSKGKKDEGEES. Residues 267–269 form a ubiquitin binding region; the sequence is FPH. Basic and acidic residues predominate over residues 276 to 285; it reads PQDSKGKKDE. Zn(2+) is bound by residues Cys295 and Cys298. Residues 295 to 336 form an RING-type; atypical zinc finger; it reads CTICLSMLEDGEDVRRLPCMHLFHQLCVDQWLAMSKKCPICR. The tract at residues 310 to 314 is ubiquitin binding; that stretch reads RLPCM. Zn(2+)-binding residues include His318 and Cys321.

The protein belongs to the Arkadia family. As to quaternary structure, monomer; binding to the ubiquitin-conjugating enzyme E2 does not trigger homodimerization. Expressed in neurons of the nervous system.

The protein resides in the nucleus. It carries out the reaction S-ubiquitinyl-[E2 ubiquitin-conjugating enzyme]-L-cysteine + [acceptor protein]-L-lysine = [E2 ubiquitin-conjugating enzyme]-L-cysteine + N(6)-ubiquitinyl-[acceptor protein]-L-lysine.. Binds free ubiquitin non-covalently via its RING-type zinc finger. Ubiquitin-binding leads to enhance the E3 ubiquitin-protein ligase activity by stabilizing the ubiquitin-conjugating enzyme E2 (donor ubiquitin) in the 'closed' conformation and activating ubiquitin transfer. In terms of biological role, E3 ubiquitin-protein ligase that acts as a regulator of motor axon elongation. Required for efficient motor axon extension in the dorsal forelimb by enhancing the transcriptional responses of the SMAD1/SMAD5/SMAD8 effectors, which are activated downstream of BMP. Acts by mediating ubiquitination and degradation of SMAD inhibitors such as SMAD6, SMAD7, SKI and SNON isoform of SKIL. The chain is E3 ubiquitin-protein ligase ARK2C from Mus musculus (Mouse).